We begin with the raw amino-acid sequence, 104 residues long: Large ribosomal subunit protein bL21c (104 aa).

This sequence belongs to the bacterial ribosomal protein bL21 family. Part of the 50S ribosomal subunit.

It localises to the plastid. The protein resides in the chloroplast. Its function is as follows. This protein binds to 23S rRNA. The protein is Large ribosomal subunit protein bL21c of Guillardia theta (Cryptophyte).